The primary structure comprises 279 residues: uncharacterized protein (279 aa).

Positions 1-29 (MSSRYTSSYTPSSRYGSGWDYSSSYSSSR) are enriched in low complexity. 2 disordered regions span residues 1–111 (MSSR…APRE) and 137–233 (LTLA…AEAL). Over residues 30–44 (TSRDRDTGSYRDRDY) the composition is skewed to basic and acidic residues. Residues 45-59 (SSTSYTSTRPRYSTY) are compositionally biased toward low complexity. A compositionally biased stretch (acidic residues) spans 142–153 (EPEESEEEEDDE). Residues 170-186 (ESSPVSSPVKEVSSAAS) show a composition bias toward low complexity. Residues 189–205 (ANDNGNETENRTPSPTV) show a composition bias toward polar residues. The span at 221 to 233 (SDVKKEGGDAEAL) shows a compositional bias: basic and acidic residues.

This is an uncharacterized protein from Caenorhabditis elegans.